The chain runs to 470 residues: 3-isopropylmalate dehydratase large subunit (470 aa).

The [4Fe-4S] cluster site is built by cysteine 347, cysteine 407, and cysteine 410.

This sequence belongs to the aconitase/IPM isomerase family. LeuC type 1 subfamily. Heterodimer of LeuC and LeuD. [4Fe-4S] cluster is required as a cofactor.

The catalysed reaction is (2R,3S)-3-isopropylmalate = (2S)-2-isopropylmalate. The protein operates within amino-acid biosynthesis; L-leucine biosynthesis; L-leucine from 3-methyl-2-oxobutanoate: step 2/4. In terms of biological role, catalyzes the isomerization between 2-isopropylmalate and 3-isopropylmalate, via the formation of 2-isopropylmaleate. This is 3-isopropylmalate dehydratase large subunit from Shewanella amazonensis (strain ATCC BAA-1098 / SB2B).